Consider the following 676-residue polypeptide: MQSWRRRKSLWLALSASWLLLVLLGGFSLLRLALPPRPRPGASQGWPRWLDAELLQSFSQPGELPEDAVSPPQAPHGGSCNWESCFDTSKCRGDGLKVFVYPAVGTISETHRRILASIEGSRFYTFSPAGACLLLLLSLDAQTGECSSMPLQWNRGRNHLVLRLHPAPCPRTFQLGQAMVAEASPTVDSFRPGFDVALPFLPEAHPLRGGAPGQLRQHSPQPGVALLALEEERGGWRTADTGSSACPWDGRCEQDPGPGQTQRQETLPNATFCLISGHRPEAASRFLQALQAGCIPVLLSPRWELPFSEVIDWTKAAIVADERLPLQVLAALQEMSPARVLALRQQTQFLWDAYFSSVEKVIHTTLEVIQDRIFGTSAHPSLLWNSPPGALLALSTFSTSPQDFPFYYLQQGSRPEGRFSALIWVGPPGQPPLKLIQAVAGSQHCAQILVLWSNERPLPSRWPETAVPLTVIDGHRKVSDRFYPYSTIRTDAILSLDARSSLSTSEVDFAFLVWQSFPERMVGFLTSSHFWDEAHGGWGYTAERTNEFSMVLTTAAFYHRYYHTLFTHSLPKALRTLADEAPTCVDVLMNFIVAAVTKLPPIKVPYGKQRQEAAPLAPGGPGPRPKPPAPAPDCINQIAAAFGHMPLLSSRLRLDPVLFKDPVSVQRKKYRSLEKP.

The Cytoplasmic segment spans residues 1-9 (MQSWRRRKS). A helical; Signal-anchor for type II membrane protein membrane pass occupies residues 10–30 (LWLALSASWLLLVLLGGFSLL). Residues 31–676 (RLALPPRPRP…RKKYRSLEKP (646 aa)) lie on the Lumenal side of the membrane. The interval 238–264 (TADTGSSACPWDGRCEQDPGPGQTQRQ) is disordered. Asn269 carries an N-linked (GlcNAc...) asparagine glycan. Cysteines 584 and 634 form a disulfide. The disordered stretch occupies residues 610–631 (RQEAAPLAPGGPGPRPKPPAPA). Residues 618-631 (PGGPGPRPKPPAPA) show a composition bias toward pro residues.

It belongs to the glycosyltransferase 47 family.

The protein resides in the endoplasmic reticulum membrane. The catalysed reaction is 3-O-{[(1-&gt;4)-beta-D-GlcA-(1-&gt;4)-alpha-D-GlcNAc](n)-(1-&gt;4)-beta-D-GlcA-(1-&gt;3)-beta-D-Gal-(1-&gt;3)-beta-D-Gal-(1-&gt;4)-beta-D-Xyl}-L-seryl-[protein] + UDP-N-acetyl-alpha-D-glucosamine = 3-O-{alpha-D-GlcNAc-[(1-&gt;4)-beta-D-GlcA-(1-&gt;4)-alpha-D-GlcNAc](n)-(1-&gt;4)-beta-D-GlcA-(1-&gt;3)-beta-D-Gal-(1-&gt;3)-beta-D-Gal-(1-&gt;4)-beta-D-Xyl}-L-seryl-[protein] + UDP + H(+). It functions in the pathway protein modification; protein glycosylation. Glycosyltransferase required for the biosynthesis of heparan-sulfate (HS). Transfers N-acetyl-alpha-D-glucosamine to the nascent HS chain (GlcNAcT-II activity). Appears to lack GlcNAcT I and GlcAT-II activities. The protein is Exostosin-like 1 (EXTL1) of Homo sapiens (Human).